Here is a 424-residue protein sequence, read N- to C-terminus: MASSNLIKQLQERGLVAQVTDEEALAERLAQGPIALYCGFDPTADSLHLGHLVPLLCLKRFQQAGHKPVALVGGATGLIGDPSFKAAERKLNTEETVQEWVDKIRKQVAPFLDFDCGENSAIAANNYDWFGNMNVLTFLRDIGKHFSVNQMINKEAVKQRLNREDQGISFTEFSYNLLQGYDFACLNKQYGVVLQIGGSDQWGNITSGIDLTRRLHQNQVFGLTVPLITKADGTKFGKTEGGAVWLDPKKTSPYKFYQFWINTADADVYRFLKFFTFMSIEEINTLEEEDKNSGKAPRAQYVLAEQVTRLVHGEEGLQAAKRITECLFSGSLSALSEADFEQLAQDGVPMVEMEKGADLMQALVDSELQPSRGQARKTIASNAITINGEKQSDPEYFFKEEDRLFGRFTLLRRGKKNYCLICWK.

Y37 contributes to the L-tyrosine binding site. A 'HIGH' region motif is present at residues 42 to 51 (PTADSLHLGH). At K144 the chain carries N6-acetyllysine. L-tyrosine is bound by residues Y175 and Q179. A 'KMSKS' region motif is present at residues 235–239 (KFGKT). ATP is bound at residue K238. Residues 357 to 414 (ADLMQALVDSELQPSRGQARKTIASNAITINGEKQSDPEYFFKEEDRLFGRFTLLRRG) form the S4 RNA-binding domain.

Belongs to the class-I aminoacyl-tRNA synthetase family. TyrS type 1 subfamily. As to quaternary structure, homodimer.

Its subcellular location is the cytoplasm. The catalysed reaction is tRNA(Tyr) + L-tyrosine + ATP = L-tyrosyl-tRNA(Tyr) + AMP + diphosphate + H(+). Functionally, catalyzes the attachment of tyrosine to tRNA(Tyr) in a two-step reaction: tyrosine is first activated by ATP to form Tyr-AMP and then transferred to the acceptor end of tRNA(Tyr). The protein is Tyrosine--tRNA ligase of Escherichia coli O8 (strain IAI1).